A 645-amino-acid polypeptide reads, in one-letter code: Bifurcating [FeFe] hydrogenase alpha subunit (645 aa).

The region spanning 1–76 is the 2Fe-2S ferredoxin-type domain; the sequence is MKIYVDGREV…GMKVKTNTPE (76 aa). [2Fe-2S] cluster is bound by residues Cys34, Cys45, Cys48, and Cys60. The 4Fe-4S His(Cys)3-ligated-type domain maps to 76–115; sequence EIYEMRRNILELILATHNRDCTTCDRNGSCKLQKYAEDFG. The [4Fe-4S] cluster site is built by His92, Cys96, Cys99, Cys105, Cys143, Cys146, Cys149, Cys153, Cys186, Cys189, Cys192, Cys196, Cys295, Cys350, Cys482, and Cys486. 2 4Fe-4S ferredoxin-type domains span residues 133–164 and 178–206; these read SAPV…VIEF and DTPL…IRND. Cys486 serves as a coordination point for Fe(2+). The [2Fe-2S] cluster site is built by Cys575, Cys580, Cys612, and Cys616.

In terms of assembly, heterotrimer composed of HydA (alpha subunit), HydB (beta subunit) and HydC (gamma subunit). Near neutral and acidic pH conditions favor oligomerization of the heterotrimeric holoenzyme. [2Fe-2S] cluster is required as a cofactor. [4Fe-4S] cluster serves as cofactor. It depends on Fe(2+) as a cofactor.

The protein resides in the cytoplasm. The enzyme catalyses 2 H2 + 2 oxidized [2Fe-2S]-[ferredoxin] + NAD(+) = 2 reduced [2Fe-2S]-[ferredoxin] + NADH + 3 H(+). Its function is as follows. Catalyzes the oxidation of the physiological electron carriers NADH and reduced ferredoxin, coupled to the production of H(2). Acts as a bifurcating [FeFe] hydrogenase, which uses the exergonic oxidation of reduced ferredoxin to drive the unfavorable oxidation of NADH to produce H(2). The alpha subunit contains the catalytic H-cluster. The sequence is that of Bifurcating [FeFe] hydrogenase alpha subunit from Thermotoga maritima (strain ATCC 43589 / DSM 3109 / JCM 10099 / NBRC 100826 / MSB8).